Reading from the N-terminus, the 377-residue chain is Probable purine permease 22 (377 aa).

Helical transmembrane passes span 39-59 (WLRV…ATVL), 71-91 (TYVV…FRFF), 107-127 (SPSF…VSAY), 128-148 (AYLS…LILA), 166-186 (FTPL…LLVV), 202-222 (VIGF…LSLI), 238-258 (VLDL…IGLF), 283-303 (TLAS…GLIF), 309-329 (FSNS…VIVF), and 338-358 (IFSI…HYLD).

Belongs to the purine permeases (TC 2.A.7.14) family.

The protein localises to the membrane. This chain is Probable purine permease 22 (PUP22), found in Arabidopsis thaliana (Mouse-ear cress).